Reading from the N-terminus, the 453-residue chain is Venom prothrombin activator notecarin-D2 (453 aa).

An N-terminal signal peptide occupies residues 1–20 (MAPQLLLCLILTFLWSLPEA). The propeptide occupies 21–40 (ESNVFLKSKVANRFLQRTKR). The Gla domain maps to 41–86 (SNSLFEEIRPGNIERECIEEKCSKEEAREVFEDNEKTETFWNVYVD). 4-carboxyglutamate is present on residues Glu46, Glu47, Glu54, Glu56, Glu59, Glu60, Glu65, Glu66, Glu69, Glu72, and Glu75. Cys57 and Cys62 are disulfide-bonded. An EGF-like 1; calcium-binding domain is found at 86-122 (DGDQCSSNPCHYRGTCKDGIGSYTCTCLPNYEGKNCE). 11 disulfides stabilise this stretch: Cys90–Cys101, Cys95–Cys110, Cys112–Cys121, Cys129–Cys140, Cys136–Cys149, Cys151–Cys164, Cys172–Cys326, Cys216–Cys221, Cys236–Cys252, Cys374–Cys388, and Cys399–Cys427. Ser92 is a glycosylation site (O-linked (Hex...) serine). An EGF-like 2 domain is found at 129–164 (CRAFNGNCWHFCKRVQSETQCSCAESYLLGVDGHSC). Residues 182–209 (REASLPDFVQSQKATVLKKSDNPSPDIR) constitute a propeptide, activation peptide. Residues 210–451 (IVNGMDCKLG…FIPWIKKIMS (242 aa)) enclose the Peptidase S1 domain. The active-site Charge relay system is His251. The N-linked (GlcNAc...) asparagine glycan is linked to Asn254. Asp306 acts as the Charge relay system in catalysis. The active-site Charge relay system is Ser403.

This sequence belongs to the peptidase S1 family. Snake venom subfamily. As to quaternary structure, heterodimer of a light chain and a heavy chain; disulfide-linked. Gamma-carboxyglutamate residues are formed by vitamin K dependent carboxylation. These residues are essential for the binding of calcium. As to expression, expressed by the venom gland.

The protein resides in the secreted. It carries out the reaction Selective cleavage of Arg-|-Thr and then Arg-|-Ile bonds in prothrombin to form thrombin.. Functionally, snake prothrombin activator that attacks the hemostatic system of prey. This protein is functionally similar to blood coagulation factor Xa. The sequence is that of Venom prothrombin activator notecarin-D2 from Notechis scutatus scutatus (Mainland tiger snake).